The following is a 266-amino-acid chain: Tryptophan synthase alpha chain (266 aa).

Residues Glu-47 and Asp-58 each act as proton acceptor in the active site.

This sequence belongs to the TrpA family. As to quaternary structure, tetramer of two alpha and two beta chains.

It is found in the plastid. Its subcellular location is the chloroplast. The enzyme catalyses (1S,2R)-1-C-(indol-3-yl)glycerol 3-phosphate + L-serine = D-glyceraldehyde 3-phosphate + L-tryptophan + H2O. It participates in amino-acid biosynthesis; L-tryptophan biosynthesis; L-tryptophan from chorismate: step 5/5. In terms of biological role, the alpha subunit is responsible for the aldol cleavage of indoleglycerol phosphate to indole and glyceraldehyde 3-phosphate. This chain is Tryptophan synthase alpha chain, found in Cyanidium caldarium (Red alga).